Reading from the N-terminus, the 2291-residue chain is Protein Ycf2 A (2291 aa).

1642-1649 (GSIGTGRS) is an ATP binding site.

This sequence belongs to the Ycf2 family.

It localises to the plastid. The protein resides in the chloroplast stroma. Probable ATPase of unknown function. Its presence in a non-photosynthetic plant (Epifagus virginiana) and experiments in tobacco indicate that it has an essential function which is probably not related to photosynthesis. The chain is Protein Ycf2 A (ycf2-A) from Atropa belladonna (Belladonna).